The sequence spans 544 residues: Ribosomal protein S6 kinase-like 1 (544 aa).

Residues 87–115 enclose the MIT domain; that stretch reads VHVDPNKERREAVKLKITKYLRRAEEIFN. Residues 145 to 534 enclose the Protein kinase domain; the sequence is SALEQLKGCR…TSRLKSHPFF (390 aa). ATP-binding positions include 151-159 and lysine 177; that span reads KGCRVVGII. 2 disordered regions span residues 262–344 and 353–372; these read PAEL…HWVR and AYGR…SLGS. Polar residues predominate over residues 303-313; sequence SRPSAVFSSDP. Catalysis depends on aspartate 407, which acts as the Proton acceptor.

It belongs to the protein kinase superfamily. Ser/Thr protein kinase family. S6 kinase subfamily.

The enzyme catalyses L-seryl-[protein] + ATP = O-phospho-L-seryl-[protein] + ADP + H(+). It catalyses the reaction L-threonyl-[protein] + ATP = O-phospho-L-threonyl-[protein] + ADP + H(+). The sequence is that of Ribosomal protein S6 kinase-like 1 (Rps6kl1) from Mus musculus (Mouse).